Here is a 201-residue protein sequence, read N- to C-terminus: Nuclear protein UL4 (201 aa).

This sequence belongs to the alphaherpesvirinae HHV-1 UL4 family.

The protein localises to the host nucleus. This chain is Nuclear protein UL4, found in Human herpesvirus 2 (strain HG52) (HHV-2).